A 698-amino-acid polypeptide reads, in one-letter code: Cytochrome c oxidase subunit 1 (698 aa).

Residues 65–85 traverse the membrane as a helical segment; the sequence is INYLYFSMVTGLSGAALATMI. E88 lines the Ca(2+) pocket. H111 lines the Fe(II)-heme a pocket. The next 8 helical transmembrane spans lie at 113–133, 147–167, 304–324, 349–369, 395–415, 434–454, 468–488, and 498–518; these read LIMV…NFLI, LNSI…KIGF, ILIL…TNLL, IFLT…AVIM, LFWF…FGFI, IWAI…HMYL, ITIM…LSLV, and FLFS…GMWL. H401 serves as a coordination point for Cu cation. The 1'-histidyl-3'-tyrosine (His-Tyr) cross-link spans 401-405; the sequence is HPEVY. Y405 provides a ligand contact to O2. Residues H450 and H451 each contribute to the Cu cation site. Mg(2+) contacts are provided by H528 and D529. Helical transmembrane passes span 533–553, 574–594, and 613–633; these read VVAH…FSGF, LIYY…LGFS, and MSTA…LMIF. H536 is a binding site for heme a3. Position 538 (H538) interacts with Fe(II)-heme a.

The protein belongs to the heme-copper respiratory oxidase family. In terms of assembly, component of the cytochrome c oxidase (complex IV, CIV), a multisubunit enzyme composed of a catalytic core of 3 subunits and several supernumerary subunits. The complex exists as a monomer or a dimer and forms supercomplexes (SCs) in the inner mitochondrial membrane with ubiquinol-cytochrome c oxidoreductase (cytochrome b-c1 complex, complex III, CIII). It depends on heme as a cofactor. Requires Cu cation as cofactor.

It is found in the mitochondrion inner membrane. The catalysed reaction is 4 Fe(II)-[cytochrome c] + O2 + 8 H(+)(in) = 4 Fe(III)-[cytochrome c] + 2 H2O + 4 H(+)(out). It functions in the pathway energy metabolism; oxidative phosphorylation. Functionally, component of the cytochrome c oxidase, the last enzyme in the mitochondrial electron transport chain which drives oxidative phosphorylation. The respiratory chain contains 3 multisubunit complexes succinate dehydrogenase (complex II, CII), ubiquinol-cytochrome c oxidoreductase (cytochrome b-c1 complex, complex III, CIII) and cytochrome c oxidase (complex IV, CIV), that cooperate to transfer electrons derived from NADH and succinate to molecular oxygen, creating an electrochemical gradient over the inner membrane that drives transmembrane transport and the ATP synthase. Cytochrome c oxidase is the component of the respiratory chain that catalyzes the reduction of oxygen to water. Electrons originating from reduced cytochrome c in the intermembrane space (IMS) are transferred via the dinuclear copper A center (CU(A)) of subunit 2 and heme A of subunit 1 to the active site in subunit 1, a binuclear center (BNC) formed by heme A3 and copper B (CU(B)). The BNC reduces molecular oxygen to 2 water molecules using 4 electrons from cytochrome c in the IMS and 4 protons from the mitochondrial matrix. This chain is Cytochrome c oxidase subunit 1 (COI), found in Tetrahymena pyriformis.